A 195-amino-acid chain; its full sequence is Thymidylate kinase (195 aa).

Position 7 to 14 (7 to 14 (GIDGVGKS)) interacts with ATP.

The protein belongs to the thymidylate kinase family.

It catalyses the reaction dTMP + ATP = dTDP + ADP. Functionally, phosphorylation of dTMP to form dTDP in both de novo and salvage pathways of dTTP synthesis. The polypeptide is Thymidylate kinase (Campylobacter concisus (strain 13826)).